The chain runs to 416 residues: 4-hydroxy-3-methylbut-2-en-1-yl diphosphate synthase (flavodoxin) (416 aa).

Residues Cys304, Cys307, Cys350, and Glu357 each coordinate [4Fe-4S] cluster.

Belongs to the IspG family. The cofactor is [4Fe-4S] cluster.

The catalysed reaction is (2E)-4-hydroxy-3-methylbut-2-enyl diphosphate + oxidized [flavodoxin] + H2O + 2 H(+) = 2-C-methyl-D-erythritol 2,4-cyclic diphosphate + reduced [flavodoxin]. Its pathway is isoprenoid biosynthesis; isopentenyl diphosphate biosynthesis via DXP pathway; isopentenyl diphosphate from 1-deoxy-D-xylulose 5-phosphate: step 5/6. Its function is as follows. Converts 2C-methyl-D-erythritol 2,4-cyclodiphosphate (ME-2,4cPP) into 1-hydroxy-2-methyl-2-(E)-butenyl 4-diphosphate. The sequence is that of 4-hydroxy-3-methylbut-2-en-1-yl diphosphate synthase (flavodoxin) from Rhizobium leguminosarum bv. trifolii (strain WSM2304).